Reading from the N-terminus, the 335-residue chain is Histidinol-phosphate aminotransferase (335 aa).

Lys202 is subject to N6-(pyridoxal phosphate)lysine.

Belongs to the class-II pyridoxal-phosphate-dependent aminotransferase family. Histidinol-phosphate aminotransferase subfamily. Homodimer. Pyridoxal 5'-phosphate is required as a cofactor.

The catalysed reaction is L-histidinol phosphate + 2-oxoglutarate = 3-(imidazol-4-yl)-2-oxopropyl phosphate + L-glutamate. Its pathway is amino-acid biosynthesis; L-histidine biosynthesis; L-histidine from 5-phospho-alpha-D-ribose 1-diphosphate: step 7/9. This Thermotoga sp. (strain RQ2) protein is Histidinol-phosphate aminotransferase.